A 452-amino-acid polypeptide reads, in one-letter code: Deoxybrevianamide E synthase notF (452 aa).

Residues Met-1–Lys-19 show a composition bias toward basic and acidic residues. The interval Met-1 to Leu-38 is disordered. Residues Pro-21–Leu-38 show a composition bias toward low complexity. Glu-108 is a brevianamide F binding site. 8 residues coordinate dimethylallyl diphosphate: Arg-122, Lys-212, Tyr-214, Lys-282, Tyr-284, Tyr-371, Tyr-436, and Tyr-440.

This sequence belongs to the tryptophan dimethylallyltransferase family. In terms of assembly, monomer.

It catalyses the reaction brevianamide F + dimethylallyl diphosphate = deoxybrevianamide E + diphosphate. The protein operates within alkaloid biosynthesis. Addition of 5 mM Mg(2+), Ca(2+) or Mn(2+) slightly enhances catalysis (about 100-120%). Significant reduction of enzyme activity (2%-35%) is observed with Cu(2+), Zn(2+), Fe(2+), or Sn(2+) (5 mM). Its function is as follows. Deoxybrevianamide E synthase; part of the gene cluster that mediates the biosynthesis of notoamide, a fungal indole alkaloid that belongs to a family of natural products containing a characteristic bicyclo[2.2.2]diazaoctane core. The first step of notoamide biosynthesis involves coupling of L-proline and L-tryptophan by the bimodular NRPS notE, to produce cyclo-L-tryptophan-L-proline called brevianamide F. The reverse prenyltransferase notF then acts as a deoxybrevianamide E synthase and converts brevianamide F to deoxybrevianamide E via reverse prenylation at C-2 of the indole ring leading to the bicyclo[2.2.2]diazaoctane core. Deoxybrevianamide E is further hydroxylated at C-6 of the indole ring, likely catalyzed by the cytochrome P450 monooxygenase notG, to yield 6-hydroxy-deoxybrevianamide E. 6-hydroxy-deoxybrevianamide E is a specific substrate of the prenyltransferase notC for normal prenylation at C-7 to produce 6-hydroxy-7-prenyl-deoxybrevianamide, also called notoamide S. As the proposed pivotal branching point in notoamide biosynthesis, notoamide S can be diverted to notoamide E through an oxidative pyran ring closure putatively catalyzed by either notH cytochrome P450 monooxygenase or the notD FAD-linked oxidoreductase. This step would be followed by an indole 2,3-epoxidation-initiated pinacol-like rearrangement catalyzed by the notB FAD-dependent monooxygenase leading to the formation of notoamide C and notoamide D. On the other hand notoamide S is converted to notoamide T by notH (or notD), a bifunctional oxidase that also functions as the intramolecular Diels-Alderase responsible for generation of (+)-notoamide T. To generate antipodal (-)-notoaminide T, notH' (or notD') in Aspergillus versicolor is expected to catalyze a Diels-Alder reaction leading to the opposite stereochemistry. The remaining oxidoreductase notD (or notH) likely catalyzes the oxidative pyran ring formation to yield (+)-stephacidin A. The FAD-dependent monooxygenase notI is highly similar to notB and is predicted to catalyze a similar conversion from (+)-stephacidin A to (-)-notoamide B via the 2,3-epoxidation of (+)-stephacidin A followed by a pinacol-type rearrangement. Finally, it remains unclear which enzyme could be responsible for the final hydroxylation steps leading to notoamide A and sclerotiamide. This Aspergillus sp. (strain MF297-2) protein is Deoxybrevianamide E synthase notF.